A 307-amino-acid chain; its full sequence is Membrane protein insertase YidC 1 (307 aa).

The first 22 residues, 1-22 (MKSKKGLTLTITLGTLALFLSG), serve as a signal peptide directing secretion. Residue C23 is the site of N-palmitoyl cysteine attachment. Residue C23 is the site of S-diacylglycerol cysteine attachment. 5 helical membrane passes run 59–79 (YGWA…PMMI), 136–156 (GIGC…YYAI), 177–197 (LILA…SMIG), 205–225 (TMRL…MSAP), and 226–246 (AGLG…TLII). The segment at 260 to 307 (ELKKHPIKTPTPTQPKPINATESKPSHPRPQNNAGRGRNAGKQQRHHK) is disordered.

This sequence belongs to the OXA1/ALB3/YidC family. Type 2 subfamily.

The protein resides in the cell membrane. Its function is as follows. Required for the insertion and/or proper folding and/or complex formation of integral membrane proteins into the membrane. Involved in integration of membrane proteins that insert both dependently and independently of the Sec translocase complex, as well as at least some lipoproteins. This chain is Membrane protein insertase YidC 1, found in Lactiplantibacillus plantarum (strain ATCC BAA-793 / NCIMB 8826 / WCFS1) (Lactobacillus plantarum).